The sequence spans 1104 residues: Lon protease homolog, mitochondrial (1104 aa).

A mitochondrion-targeting transit peptide spans 1-58 (MLPLRAFARLAQRPRLSRPTQLARSSLPRPSPSRPAAHYLALAPAPSTRFLHSSPPVL). 2 disordered regions span residues 8 to 144 (ARLA…KEVA) and 275 to 295 (EGSQ…SEVP). A compositionally biased stretch (low complexity) spans 22–46 (LARSSLPRPSPSRPAAHYLALAPAP). Residues 80–103 (KQDDQVEKPLPDAESSKSAEERAK) show a composition bias toward basic and acidic residues. The span at 104 to 128 (SQSSKPDIKASSSDSVSSSAPAPGS) shows a compositional bias: low complexity. Residues 129-139 (ADGGSPPGAGG) are compositionally biased toward gly residues. Positions 155 to 444 (VLAIPITHRP…RALVLLKKEL (290 aa)) constitute a Lon N-terminal domain. Basic and acidic residues predominate over residues 281-291 (AKGEGEVKSFE). 597-604 (GPPGVGKT) lines the ATP pocket. Positions 895-1082 (SPPAGVSTGL…RQVLHEAFRG (188 aa)) constitute a Lon proteolytic domain. Active-site residues include Ser-987 and Lys-1030.

The protein belongs to the peptidase S16 family. As to quaternary structure, homohexamer or homoheptamer. Organized in a ring with a central cavity.

Its subcellular location is the mitochondrion matrix. It carries out the reaction Hydrolysis of proteins in presence of ATP.. Functionally, ATP-dependent serine protease that mediates the selective degradation of misfolded, unassembled or oxidatively damaged polypeptides as well as certain short-lived regulatory proteins in the mitochondrial matrix. May also have a chaperone function in the assembly of inner membrane protein complexes. Participates in the regulation of mitochondrial gene expression and in the maintenance of the integrity of the mitochondrial genome. Binds to mitochondrial DNA in a site-specific manner. This is Lon protease homolog, mitochondrial from Cryptococcus neoformans var. neoformans serotype D (strain JEC21 / ATCC MYA-565) (Filobasidiella neoformans).